The chain runs to 346 residues: Galactitol 1-phosphate 5-dehydrogenase (346 aa).

Zn(2+)-binding residues include Cys-38, His-59, Cys-89, Cys-92, Cys-95, Cys-103, and Glu-144.

It belongs to the zinc-containing alcohol dehydrogenase family. Zn(2+) is required as a cofactor.

The enzyme catalyses galactitol 1-phosphate + NAD(+) = keto-D-tagatose 6-phosphate + NADH + H(+). Converts galactitol 1-phosphate to tagatose 6-phosphate. The polypeptide is Galactitol 1-phosphate 5-dehydrogenase (gatD) (Escherichia coli O157:H7).